We begin with the raw amino-acid sequence, 524 residues long: Leucine-rich repeat-containing protein 1 (524 aa).

LRR repeat units lie at residues 11-34 (NRHV…IYRY), 35-58 (ARSL…FFQL), 60-81 (KLRK…IANF), 83-105 (QLVE…AFCK), 107-126 (LQVA…SFPE), 127-149 (LQNL…NIGN), 150-172 (LYNL…SLTQ), 173-196 (LRRL…IGAL), 198-218 (HLKD…EIGN), 219-242 (LKNL…ISGL), 244-264 (SLTY…GIGK), 265-288 (LKKL…IGDC), 290-310 (NLTE…SIGK), 311-334 (LKKL…IGGC), 336-356 (SLTM…EVSQ), 357-380 (AVEL…LTTL), and 382-405 (LKAL…IDRA). Residues 456-512 (SAIRFLEDEKDEDENETRTLQRRATPHPGELKNMKKTVENLRNDMNAAKGLDSNKNE) adopt a coiled-coil conformation. Residues 464–485 (EKDEDENETRTLQRRATPHPGE) are disordered. Residue Thr480 is modified to Phosphothreonine.

Interacts with DLG1. May form a complex with DLG1 and ERBIN, where interaction between LRRC1 and ERBIN is indirect.

The protein resides in the cytoplasm. It is found in the membrane. This chain is Leucine-rich repeat-containing protein 1 (Lrrc1), found in Mus musculus (Mouse).